Consider the following 279-residue polypeptide: Putative potassium channel regulatory protein (279 aa).

The BTB domain maps to 5–74 (ELVTLNVGGM…VRTSQLSLPS (70 aa)). Residues 256–279 (ENSRQENYETETVQVKQAKPNKKR) are disordered.

It is found in the endoplasmic reticulum. Inhibits potassium fluxes in cells, possibly by retaining potassium channels in the cytoplasm. The polypeptide is Putative potassium channel regulatory protein (kcnrg) (Xenopus tropicalis (Western clawed frog)).